The chain runs to 211 residues: ATP phosphoribosyltransferase (211 aa).

Belongs to the ATP phosphoribosyltransferase family. Short subfamily. In terms of assembly, heteromultimer composed of HisG and HisZ subunits.

It is found in the cytoplasm. It catalyses the reaction 1-(5-phospho-beta-D-ribosyl)-ATP + diphosphate = 5-phospho-alpha-D-ribose 1-diphosphate + ATP. It functions in the pathway amino-acid biosynthesis; L-histidine biosynthesis; L-histidine from 5-phospho-alpha-D-ribose 1-diphosphate: step 1/9. In terms of biological role, catalyzes the condensation of ATP and 5-phosphoribose 1-diphosphate to form N'-(5'-phosphoribosyl)-ATP (PR-ATP). Has a crucial role in the pathway because the rate of histidine biosynthesis seems to be controlled primarily by regulation of HisG enzymatic activity. In Pseudomonas entomophila (strain L48), this protein is ATP phosphoribosyltransferase.